The following is a 230-amino-acid chain: MKDLPIIALDFESATKVNTFLDQFDEPLFVKIGMELFYQAGPDLIKSIKSRGHDIFLDLKLHDIPNTVEKAMEGLGKLDVDLVNVHAAGGTDMMKAAVRGLHKYSNDTKIIAVTQLTSTTEEMLRNEQNIQTTIEEAVLNYATLTQQAGLDGVVCSPLEAELLTNKLGSNFLKVTPGIRPQGAAVDDQKRITTPEDAKQLGATHIVVGRPITQSENPVESYHTIKESWLG.

Residues D10, K31, 58–67 (DLKLHDIPNT), T117, R179, Q188, G208, and R209 contribute to the substrate site. Catalysis depends on K60, which acts as the Proton donor.

This sequence belongs to the OMP decarboxylase family. Type 1 subfamily. Homodimer.

It catalyses the reaction orotidine 5'-phosphate + H(+) = UMP + CO2. Its pathway is pyrimidine metabolism; UMP biosynthesis via de novo pathway; UMP from orotate: step 2/2. Catalyzes the decarboxylation of orotidine 5'-monophosphate (OMP) to uridine 5'-monophosphate (UMP). The polypeptide is Orotidine 5'-phosphate decarboxylase (Staphylococcus haemolyticus (strain JCSC1435)).